The sequence spans 83 residues: Small ribosomal subunit protein uS17 (83 aa).

Belongs to the universal ribosomal protein uS17 family. Part of the 30S ribosomal subunit.

Its function is as follows. One of the primary rRNA binding proteins, it binds specifically to the 5'-end of 16S ribosomal RNA. The protein is Small ribosomal subunit protein uS17 of Campylobacter hominis (strain ATCC BAA-381 / DSM 21671 / CCUG 45161 / LMG 19568 / NCTC 13146 / CH001A).